The following is a 271-amino-acid chain: Rhomboid-type serine protease 2 (271 aa).

6 helical membrane-spanning segments follow: residues 16 to 36, 64 to 84, 89 to 111, 115 to 137, 152 to 172, and 176 to 196; these read GLAV…NLVY, HLSF…IVMF, GTLY…YCLI, LFPN…YFAV, FSFP…LLAP, and LPGH…ENWV. Ser-125 (nucleophile) is an active-site residue. Residue His-179 is part of the active site. The disordered stretch occupies residues 252–271; that stretch reads HNTDTPAEPTFQGNGRVLGN.

The protein belongs to the peptidase S54 family.

It localises to the golgi apparatus membrane. The protein resides in the golgi apparatus. The protein localises to the cis-Golgi network membrane. It catalyses the reaction Cleaves type-1 transmembrane domains using a catalytic dyad composed of serine and histidine that are contributed by different transmembrane domains.. Functionally, probable rhomboid-type serine protease that catalyzes intramembrane proteolysis. The sequence is that of Rhomboid-type serine protease 2 (RBD2) from Kluyveromyces lactis (strain ATCC 8585 / CBS 2359 / DSM 70799 / NBRC 1267 / NRRL Y-1140 / WM37) (Yeast).